The chain runs to 273 residues: Tryptase (273 aa).

The first 18 residues, 1–18 (MLKLLLLTLPLLSSLVHA), serve as a signal peptide directing secretion. The propeptide at 19–28 (APGPAMTREG) is activation peptide. The Peptidase S1 domain maps to 29–270 (IVGGQEAHGN…YLDWIHHYVP (242 aa)). A glycan (N-linked (GlcNAc...) asparagine) is linked at Asn-49. Residues Cys-57 and Cys-73 are joined by a disulfide bond. Active-site charge relay system residues include His-72 and Asp-119. Asn-130 carries N-linked (GlcNAc...) asparagine glycosylation. 3 disulfides stabilise this stretch: Cys-153-Cys-228, Cys-186-Cys-209, and Cys-218-Cys-246. The active-site Charge relay system is the Ser-222.

This sequence belongs to the peptidase S1 family. Tryptase subfamily.

The enzyme catalyses Preferential cleavage: Arg-|-Xaa, Lys-|-Xaa, but with more restricted specificity than trypsin.. In terms of biological role, tryptase is the major neutral protease present in mast cells and is secreted upon the coupled activation-degranulation response of this cell type. May play a role in innate immunity. The protein is Tryptase (Tpsab1) of Mus musculus (Mouse).